The following is a 176-amino-acid chain: MSRKDSWLTIGKLVGAQGLRGEVKVNPSSDFPERFINPGERWLQKNTEEPSRIELKSGRQLPGKSIYIVSFIGITDRNKAESIVGNKLLVPSDQKPKLKEGEFHLVDLLGLKAKFTQDGSDVGEVIDLTSAGNDLLVIKLVEGKTVLIPFVKEIVPVINLKQGWLLIKPPPGLLEL.

Residues 99–173 enclose the PRC barrel domain; sequence KEGEFHLVDL…WLLIKPPPGL (75 aa).

The protein belongs to the RimM family. In terms of assembly, binds ribosomal protein uS19.

The protein localises to the cytoplasm. Its function is as follows. An accessory protein needed during the final step in the assembly of 30S ribosomal subunit, possibly for assembly of the head region. Essential for efficient processing of 16S rRNA. May be needed both before and after RbfA during the maturation of 16S rRNA. It has affinity for free ribosomal 30S subunits but not for 70S ribosomes. In Prochlorococcus marinus (strain MIT 9211), this protein is Ribosome maturation factor RimM.